We begin with the raw amino-acid sequence, 224 residues long: tRNA (guanine-N(7)-)-methyltransferase (224 aa).

Residues Glu54, Glu79, Glu106, and Asp129 each coordinate S-adenosyl-L-methionine. The active site involves Asp129. Substrate is bound by residues Lys133 and Asp165.

It belongs to the class I-like SAM-binding methyltransferase superfamily. TrmB family.

The enzyme catalyses guanosine(46) in tRNA + S-adenosyl-L-methionine = N(7)-methylguanosine(46) in tRNA + S-adenosyl-L-homocysteine. It functions in the pathway tRNA modification; N(7)-methylguanine-tRNA biosynthesis. Its function is as follows. Catalyzes the formation of N(7)-methylguanine at position 46 (m7G46) in tRNA. In Chlamydia trachomatis serovar D (strain ATCC VR-885 / DSM 19411 / UW-3/Cx), this protein is tRNA (guanine-N(7)-)-methyltransferase.